Reading from the N-terminus, the 567-residue chain is Frizzled-7 (567 aa).

A signal peptide spans 1-31 (MRPAAGEAGAGLRWLGLAALLAALLGTPCAA). The Extracellular portion of the chain corresponds to 32–250 (AHHEDKAISV…EAEVRFARLW (219 aa)). The FZ domain maps to 42–161 (PDHGFCQPIS…HGAGEICVGQ (120 aa)). Disulfide bonds link Cys-47/Cys-108, Cys-55/Cys-101, Cys-92/Cys-129, Cys-118/Cys-158, and Cys-122/Cys-146. N-linked (GlcNAc...) asparagine glycosylation occurs at Asn-61. The N-linked (GlcNAc...) asparagine glycan is linked to Asn-162. The chain crosses the membrane as a helical span at residues 251 to 271 (VGVWSVLCCASTLFTVLTYLV). The Cytoplasmic portion of the chain corresponds to 272-282 (DMRRFSYPERP). A helical membrane pass occupies residues 283 to 303 (IIFLSGCYFMVAVAYAAGFLL). Residues 304–330 (EERVVCLERFSEDGYRTVAQGTKKEGC) are Extracellular-facing. Residues 331 to 351 (TILFMILYFFGMASSIWWVIL) traverse the membrane as a helical segment. At 352 to 373 (SLTWFLAAGMKWGHEAIEANSQ) the chain is on the cytoplasmic side. The helical transmembrane segment at 374–394 (YFHLAAWAVPAVKTITILAMG) threads the bilayer. At 395-417 (QVDGDVLSGVCYVGIYSVDSLRG) the chain is on the extracellular side. The chain crosses the membrane as a helical span at residues 418–438 (FVLAPLFVYLFIGTSFLLAGF). Topologically, residues 439-464 (VSLFRIRTIMKHDGTKTEKLEKLMVR) are cytoplasmic. The chain crosses the membrane as a helical span at residues 465-485 (IGVFSVLYTVPATIVVACYFY). At 486 to 521 (EQAFRSTWEKTWLLQTCKTYAVPCPSHFAPMSPDFT) the chain is on the extracellular side. A helical membrane pass occupies residues 522–542 (VFMIKYLMTMIVGITTGFWIW). Residues 543 to 567 (SGKTLQSWRRFYHRLSTGSKGETAV) lie on the Cytoplasmic side of the membrane. The Lys-Thr-X-X-X-Trp motif, mediates interaction with the PDZ domain of Dvl family members signature appears at 545-550 (KTLQSW). The PDZ-binding motif lies at 565-567 (TAV).

The protein belongs to the G-protein coupled receptor Fz/Smo family. Expressed broadly in cranial ectoderm. Also expressed in the developing somites and in other cranial placodes, including the olfactory, lens, otic placodes (lateral half of the vesicle) and epibranchial placodes. Low level of expression in all the mesoderm derivatives in the limb buds.

The protein resides in the cell membrane. It localises to the endosome membrane. Receptor for Wnt proteins. Most of frizzled receptors are coupled to the beta-catenin canonical signaling pathway, which leads to the activation of disheveled proteins, inhibition of GSK-3 kinase, nuclear accumulation of beta-catenin and activation of Wnt target genes. A second signaling pathway involving PKC and calcium fluxes has been seen for some family members, but it is not yet clear if it represents a distinct pathway or if it can be integrated in the canonical pathway, as PKC seems to be required for Wnt-mediated inactivation of GSK-3 kinase. Both pathways seem to involve interactions with G-proteins. May be involved in transduction and intercellular transmission of polarity information during tissue morphogenesis and/or in differentiated tissues. The chain is Frizzled-7 (FZD7) from Gallus gallus (Chicken).